The following is a 296-amino-acid chain: Stanniocalcin-2 (296 aa).

Residues 1-24 (MCAERLGQFVTLALVFATLDPAQG) form the signal peptide. Positions 21 to 44 (PAQGTDSTNPPEGPQDRSSQQKGR) are disordered. Residues 24-44 (GTDSTNPPEGPQDRSSQQKGR) show a composition bias toward polar residues. Asparagine 73 is a glycosylation site (N-linked (GlcNAc...) asparagine). The segment at 218-296 (PPTAAPEHQP…EQSEYSDIRR (79 aa)) is disordered. Residues 240-258 (RDTDHHLTANRGAKGERGS) are compositionally biased toward basic and acidic residues. Low complexity predominate over residues 272 to 282 (GQSAQGPSGSS).

This sequence belongs to the stanniocalcin family. As to quaternary structure, homodimer; disulfide-linked. Found in a variety of tissues including skeletal muscle, small intestine, kidney, liver and brain.

It localises to the secreted. In terms of biological role, has an anti-hypocalcemic action on calcium and phosphate homeostasis. The polypeptide is Stanniocalcin-2 (Stc2) (Mus musculus (Mouse)).